Reading from the N-terminus, the 437-residue chain is GTPase Obg (437 aa).

One can recognise an Obg domain in the interval 2–160 (SMFLDTAKIS…RQLELELKIL (159 aa)). The OBG-type G domain occupies 161–338 (ADVGLVGFPS…LLEATAELLA (178 aa)). Residues 167 to 174 (GFPSVGKS), 192 to 196 (FTTIV), 214 to 217 (DLPG), 284 to 287 (NKMD), and 319 to 321 (SSL) each bind GTP. Residues serine 174 and threonine 194 each contribute to the Mg(2+) site. Residues 359–437 (GFAETEKDFE…IGKFEFEFVD (79 aa)) enclose the OCT domain.

The protein belongs to the TRAFAC class OBG-HflX-like GTPase superfamily. OBG GTPase family. In terms of assembly, monomer. Mg(2+) serves as cofactor.

The protein resides in the cytoplasm. An essential GTPase which binds GTP, GDP and possibly (p)ppGpp with moderate affinity, with high nucleotide exchange rates and a fairly low GTP hydrolysis rate. Plays a role in control of the cell cycle, stress response, ribosome biogenesis and in those bacteria that undergo differentiation, in morphogenesis control. The polypeptide is GTPase Obg (Streptococcus pyogenes serotype M1).